The following is a 201-amino-acid chain: MLAFTLRFIKNKRYLATLAGALVIIAGLTSQHAWSGNGLPQINGKALAALAKQHPVVVLFRHVERCDRSDNTCLSDSTGITVNGAQDARALGKAFSADIQNYNLYSSNTVRTIQSATWFSAGRSLTVDKKMMDCGSGIYASINTLLKKSQNKNIVIFTHNHCLTYIAKNKRGVKFDPDYLNALVMHAENGKLFLDGEFVPG.

The first 35 residues, M1–S35, serve as a signal peptide directing secretion.

Belongs to the phosphoglycerate mutase family. Ais subfamily.

It is found in the periplasm. It functions in the pathway bacterial outer membrane biogenesis; lipopolysaccharide metabolism. Catalyzes the dephosphorylation of heptose(II) of the outer membrane lipopolysaccharide core. The chain is Lipopolysaccharide core heptose(II)-phosphate phosphatase from Salmonella choleraesuis (strain SC-B67).